The sequence spans 402 residues: Nicotinate phosphoribosyltransferase (402 aa).

A Phosphohistidine; by autocatalysis modification is found at His221.

The protein belongs to the NAPRTase family. Post-translationally, transiently phosphorylated on a His residue during the reaction cycle. Phosphorylation strongly increases the affinity for substrates and increases the rate of nicotinate D-ribonucleotide production. Dephosphorylation regenerates the low-affinity form of the enzyme, leading to product release.

It catalyses the reaction nicotinate + 5-phospho-alpha-D-ribose 1-diphosphate + ATP + H2O = nicotinate beta-D-ribonucleotide + ADP + phosphate + diphosphate. The protein operates within cofactor biosynthesis; NAD(+) biosynthesis; nicotinate D-ribonucleotide from nicotinate: step 1/1. Catalyzes the synthesis of beta-nicotinate D-ribonucleotide from nicotinate and 5-phospho-D-ribose 1-phosphate at the expense of ATP. The protein is Nicotinate phosphoribosyltransferase of Sodalis glossinidius (strain morsitans).